Here is a 114-residue protein sequence, read N- to C-terminus: Histone H3-3 (114 aa).

The span at 1–17 (NTGGKAPRKHIAHKQAK) shows a compositional bias: basic residues. The tract at residues 1–32 (NTGGKAPRKHIAHKQAKKSSAAAATGGVKKPH) is disordered. Low complexity predominate over residues 18-28 (KSSAAAATGGV).

Belongs to the histone H3 family. The nucleosome is a histone octamer containing two molecules each of H2A, H2B, H3 and H4 assembled in one H3-H4 heterotetramer and two H2A-H2B heterodimers. The octamer wraps approximately 147 bp of DNA.

It is found in the nucleus. The protein resides in the chromosome. Functionally, core component of nucleosome. Nucleosomes wrap and compact DNA into chromatin, limiting DNA accessibility to the cellular machineries which require DNA as a template. Histones thereby play a central role in transcription regulation, DNA repair, DNA replication and chromosomal stability. DNA accessibility is regulated via a complex set of post-translational modifications of histones, also called histone code, and nucleosome remodeling. The chain is Histone H3-3 (H3-3) from Stylonychia lemnae (Ciliate).